A 376-amino-acid chain; its full sequence is Integrator complex assembly factor WDR73 (376 aa).

3 WD repeats span residues 84-123 (FSEE…SDVI), 276-316 (ASKN…TESS), and 337-376 (TSPA…ITDR). Residues 316–336 (SSPQPIFSHRGHEMSQEAKSS) form a disordered region.

The protein belongs to the WD repeat WDR73 family.

The protein localises to the cytoplasm. The protein resides in the cytoskeleton. It localises to the spindle. Its subcellular location is the spindle pole. It is found in the cleavage furrow. Functionally, component of a multiprotein complex required for the assembly of the RNA endonuclease module of the integrator complex. Associates with ints9 and ints11 in the cytoplasm, stabilizing the ints9-ints11 heterodimer and blocking the active site of ints11. Brat1 then joins the complex and plugs the active site of ints11, leading to wdr73 release and nuclear import of ints9 and ints11. This is Integrator complex assembly factor WDR73 (wdr73) from Danio rerio (Zebrafish).